Here is a 561-residue protein sequence, read N- to C-terminus: Tectonic-like complex member MKS1 (561 aa).

Residues 314–442 (LRLFVNGEVV…TVSTWRPMEL (129 aa)) enclose the C2 B9-type domain.

In terms of assembly, part of the tectonic-like complex (also named B9 complex). Interacts with TMEM107. Interacts with TCTN3, AHI1, TCTN1, TCTN2, CC2D2A. Interacts with FLNA. Interacts with TMEM67. Interacts with B9D1 and B9D2. Widely expressed in embryo at 15.5 dpc, with a relatively strong expression in brain, liver, kidney and digits of the upper limbs. Highly expressed in bronchiolar epithelium.

The protein resides in the cytoplasm. Its subcellular location is the cytoskeleton. It is found in the cilium basal body. It localises to the microtubule organizing center. The protein localises to the centrosome. Its function is as follows. Component of the tectonic-like complex, a complex localized at the transition zone of primary cilia and acting as a barrier that prevents diffusion of transmembrane proteins between the cilia and plasma membranes. Involved in centrosome migration to the apical cell surface during early ciliogenesis. Required for ciliary structure and function, including a role in regulating length and appropriate number through modulating centrosome duplication. Required for cell branching morphology. This chain is Tectonic-like complex member MKS1 (Mks1), found in Mus musculus (Mouse).